The sequence spans 439 residues: Na(+)/H(+) antiporter NhaA 1 (439 aa).

11 helical membrane-spanning segments follow: residues 14-34 (ITGG…ANLA), 60-80 (ISLH…FIGL), 98-118 (ALPL…YYFF), 127-147 (GWGI…AMVG), 156-176 (IFLS…IAIF), 179-199 (EQIF…LAVA), 213-233 (IGLI…TIAG), 303-323 (HPIS…GVIV), 335-355 (IVLG…FLFA), 375-395 (IIGT…ISDL), and 408-428 (VAVL…LISA).

The protein belongs to the NhaA Na(+)/H(+) (TC 2.A.33) antiporter family.

The protein localises to the cell inner membrane. It catalyses the reaction Na(+)(in) + 2 H(+)(out) = Na(+)(out) + 2 H(+)(in). In terms of biological role, na(+)/H(+) antiporter that extrudes sodium in exchange for external protons. The chain is Na(+)/H(+) antiporter NhaA 1 from Psychromonas ingrahamii (strain DSM 17664 / CCUG 51855 / 37).